Reading from the N-terminus, the 266-residue chain is tRNA pseudouridine synthase A (266 aa).

D56 serves as the catalytic Nucleophile. Y110 contacts substrate.

The protein belongs to the tRNA pseudouridine synthase TruA family.

The catalysed reaction is uridine(38/39/40) in tRNA = pseudouridine(38/39/40) in tRNA. Its function is as follows. Formation of pseudouridine at positions 38, 39 and 40 in the anticodon stem and loop of transfer RNAs. The polypeptide is tRNA pseudouridine synthase A (Halobacterium salinarum (strain ATCC 29341 / DSM 671 / R1)).